Reading from the N-terminus, the 1069-residue chain is Protocadherin-7 (1069 aa).

Residues 1 to 28 form the signal peptide; sequence MLRMRTAGWARGWCLGCCLLLPLSLSLA. 7 consecutive Cadherin domains span residues 29-143, 144-308, 309-415, 424-535, 536-639, 640-742, and 745-862; these read AAKQ…TPTF, PSPV…SPRF, EKSV…VPSI, PLKD…PPMF, GQSV…DPKF, MQDV…APTV, and PKNI…IPLT. At 29-879 the chain is on the extracellular side; the sequence is AAKQLLRYRL…SYEISKQRLS (851 aa). N-linked (GlcNAc...) asparagine glycosylation is present at Asn-79. Residues 182–242 are disordered; it reads LLQEPGGGGS…GGTNPGGRSS (61 aa). The segment covering 207–221 has biased composition (gly residues); sequence PGGGGNGASGGGSGG. 6 N-linked (GlcNAc...) asparagine glycosylation sites follow: Asn-689, Asn-747, Asn-780, Asn-822, Asn-840, and Asn-845. The helical transmembrane segment at 880–900 threads the bilayer; that stretch reads IVIGVVAGIMTVILIILIVVM. Residues 901 to 1069 are Cytoplasmic-facing; the sequence is ARYCRSKNKN…RLHPYITVFG (169 aa). Residues 910-988 are disordered; the sequence is NGYEAGKKDH…RYRSVNGGPG (79 aa). Positions 930-944 are enriched in basic residues; it reads KSKKPKKDKKNKKSK. Phosphoserine occurs at positions 989 and 1011.

As to expression, expressed predominantly in brain and heart and at lower levels in various other tissues.

The protein localises to the cell membrane. In Homo sapiens (Human), this protein is Protocadherin-7 (PCDH7).